The sequence spans 1167 residues: ATP-dependent helicase/deoxyribonuclease subunit B (1167 aa).

The 359-residue stretch at 1 to 359 (MSLRFLLGRS…IRQTEAYRDL (359 aa)) folds into the UvrD-like helicase ATP-binding domain. 8 to 15 (GRSGSGKT) contributes to the ATP binding site. The UvrD-like helicase C-terminal domain occupies 282 to 588 (VNRRHQDKAL…EFALVPPAID (307 aa)). Positions 803, 1125, 1128, and 1134 each coordinate [4Fe-4S] cluster.

It belongs to the helicase family. AddB/RexB type 1 subfamily. Heterodimer of AddA and AddB. It depends on Mg(2+) as a cofactor. [4Fe-4S] cluster serves as cofactor.

Functionally, the heterodimer acts as both an ATP-dependent DNA helicase and an ATP-dependent, dual-direction single-stranded exonuclease. Recognizes the chi site generating a DNA molecule suitable for the initiation of homologous recombination. The AddB subunit has 5' -&gt; 3' nuclease activity but not helicase activity. The chain is ATP-dependent helicase/deoxyribonuclease subunit B from Geobacillus thermodenitrificans (strain NG80-2).